The primary structure comprises 162 residues: Nucleotide-binding protein ABSDF0503 (162 aa).

The protein belongs to the YajQ family.

Functionally, nucleotide-binding protein. This chain is Nucleotide-binding protein ABSDF0503, found in Acinetobacter baumannii (strain SDF).